A 258-amino-acid polypeptide reads, in one-letter code: Chymotrypsin-2 (258 aa).

The signal sequence occupies residues 1–17; that stretch reads MLRKVFAVVSVLLVVSA. The propeptide at 18–32 is activation peptide; it reads AKVTKLVLDDHYVNR. One can recognise a Peptidase S1 domain in the interval 33 to 255; that stretch reads VVGGEVAKNG…YHEWVRTTMA (223 aa). C59 and C75 are oxidised to a cystine. Residues H74 and D119 each act as charge relay system in the active site. 2 disulfides stabilise this stretch: C182–C198 and C208–C232. The active-site Charge relay system is S212.

It belongs to the peptidase S1 family. After blood feeding, expression is induced in the midgut epithelium, followed by secretion into the midgut lumen.

It is found in the secreted. The enzyme catalyses Preferential cleavage: Tyr-|-Xaa, Trp-|-Xaa, Phe-|-Xaa, Leu-|-Xaa.. The protein is Chymotrypsin-2 (CHYM2) of Anopheles gambiae (African malaria mosquito).